Reading from the N-terminus, the 294-residue chain is MTLFLAGPTGSGKSAVAVELAEMLDAEIVSSDAYQVYRELPILTAAPSPADRERVPHHMVSIIPVQKNWNATEHYHRAMRCMEEIHARGKIAIVTGGSGLYFKFLSHGLSEAPPGDAALRAAFANCSTEALYARLSSLDPEGAASTDASNRRYVERNLEIVLAGGKPLSFWKRNWLTPPRGPGWVISRDVPELDERIAHRAARMMQEGAVEETASLGPCSATAERTLGLALIRSMLRGEISRENCQGQLALATRQYAKRQRTWLKREQWLRKLPASPSDSPRALAERIMEELGH.

7–14 serves as a coordination point for ATP; sequence GPTGSGKS. 9–14 contacts substrate; the sequence is TGSGKS.

It belongs to the IPP transferase family. In terms of assembly, monomer. Mg(2+) serves as cofactor.

It carries out the reaction adenosine(37) in tRNA + dimethylallyl diphosphate = N(6)-dimethylallyladenosine(37) in tRNA + diphosphate. Functionally, catalyzes the transfer of a dimethylallyl group onto the adenine at position 37 in tRNAs that read codons beginning with uridine, leading to the formation of N6-(dimethylallyl)adenosine (i(6)A). The sequence is that of tRNA dimethylallyltransferase from Akkermansia muciniphila (strain ATCC BAA-835 / DSM 22959 / JCM 33894 / BCRC 81048 / CCUG 64013 / CIP 107961 / Muc).